A 302-amino-acid chain; its full sequence is Bifunctional protein FolD (302 aa).

Residues 171 to 173 (GRS), serine 196, and isoleucine 237 each bind NADP(+).

This sequence belongs to the tetrahydrofolate dehydrogenase/cyclohydrolase family. In terms of assembly, homodimer.

The catalysed reaction is (6R)-5,10-methylene-5,6,7,8-tetrahydrofolate + NADP(+) = (6R)-5,10-methenyltetrahydrofolate + NADPH. The enzyme catalyses (6R)-5,10-methenyltetrahydrofolate + H2O = (6R)-10-formyltetrahydrofolate + H(+). Its pathway is one-carbon metabolism; tetrahydrofolate interconversion. In terms of biological role, catalyzes the oxidation of 5,10-methylenetetrahydrofolate to 5,10-methenyltetrahydrofolate and then the hydrolysis of 5,10-methenyltetrahydrofolate to 10-formyltetrahydrofolate. This is Bifunctional protein FolD from Sphingopyxis alaskensis (strain DSM 13593 / LMG 18877 / RB2256) (Sphingomonas alaskensis).